We begin with the raw amino-acid sequence, 106 residues long: ATP-dependent Clp protease adapter protein ClpS (106 aa).

This sequence belongs to the ClpS family. As to quaternary structure, binds to the N-terminal domain of the chaperone ClpA.

Involved in the modulation of the specificity of the ClpAP-mediated ATP-dependent protein degradation. The protein is ATP-dependent Clp protease adapter protein ClpS of Salmonella arizonae (strain ATCC BAA-731 / CDC346-86 / RSK2980).